A 759-amino-acid chain; its full sequence is uncharacterized protein (759 aa).

The region spanning 352–556 (VIQKLSDYAF…KDEDIADFSI (205 aa)) is the MCM domain. 397–404 (SDPGVGKS) contributes to the ATP binding site.

Belongs to the MCM family.

This is an uncharacterized protein from Methanocaldococcus jannaschii (strain ATCC 43067 / DSM 2661 / JAL-1 / JCM 10045 / NBRC 100440) (Methanococcus jannaschii).